We begin with the raw amino-acid sequence, 120 residues long: Ribosome-binding factor A (120 aa).

It belongs to the RbfA family. In terms of assembly, monomer. Binds 30S ribosomal subunits, but not 50S ribosomal subunits or 70S ribosomes.

It localises to the cytoplasm. One of several proteins that assist in the late maturation steps of the functional core of the 30S ribosomal subunit. Associates with free 30S ribosomal subunits (but not with 30S subunits that are part of 70S ribosomes or polysomes). Required for efficient processing of 16S rRNA. May interact with the 5'-terminal helix region of 16S rRNA. The polypeptide is Ribosome-binding factor A (Clostridium botulinum (strain ATCC 19397 / Type A)).